We begin with the raw amino-acid sequence, 267 residues long: Undecaprenyl-diphosphatase (267 aa).

The next 8 helical transmembrane spans lie at 1–21 (MSYF…FLPI), 39–59 (QGLA…VIYF), 83–103 (AKLA…GLLM), 111–131 (LRSA…LWWV), 144–164 (TGWK…IPGT), 189–209 (FLMS…KLVT), 218–238 (FLLT…HFFL), and 246–266 (MTPF…FLLM).

The protein belongs to the UppP family.

It localises to the cell inner membrane. It catalyses the reaction di-trans,octa-cis-undecaprenyl diphosphate + H2O = di-trans,octa-cis-undecaprenyl phosphate + phosphate + H(+). Its function is as follows. Catalyzes the dephosphorylation of undecaprenyl diphosphate (UPP). Confers resistance to bacitracin. The protein is Undecaprenyl-diphosphatase of Vibrio campbellii (strain ATCC BAA-1116).